The following is a 433-amino-acid chain: GTPase Der (433 aa).

EngA-type G domains are found at residues 5–167 and 174–349; these read KKVL…GEAN and IKVG…DQLE. Residues 11 to 18, 58 to 62, 119 to 122, 180 to 187, 227 to 231, and 292 to 295 contribute to the GTP site; these read GRPNVGKS, DTGGF, NKVD, GKPNSGKS, DTAGI, and SKWD. The 80-residue stretch at 350 to 429 folds into the KH-like domain; that stretch reads FKTSTPDLNK…PILVELREKI (80 aa).

Belongs to the TRAFAC class TrmE-Era-EngA-EngB-Septin-like GTPase superfamily. EngA (Der) GTPase family. Associates with the 50S ribosomal subunit.

In terms of biological role, GTPase that plays an essential role in the late steps of ribosome biogenesis. The polypeptide is GTPase Der (Borreliella afzelii (strain PKo) (Borrelia afzelii)).